Here is a 62-residue protein sequence, read N- to C-terminus: UPF0434 protein FTL_1400 (62 aa).

The protein belongs to the UPF0434 family.

The protein is UPF0434 protein FTL_1400 of Francisella tularensis subsp. holarctica (strain LVS).